We begin with the raw amino-acid sequence, 220 residues long: ATP phosphoribosyltransferase (220 aa).

The protein belongs to the ATP phosphoribosyltransferase family. Short subfamily. Heteromultimer composed of HisG and HisZ subunits.

The protein resides in the cytoplasm. It catalyses the reaction 1-(5-phospho-beta-D-ribosyl)-ATP + diphosphate = 5-phospho-alpha-D-ribose 1-diphosphate + ATP. It participates in amino-acid biosynthesis; L-histidine biosynthesis; L-histidine from 5-phospho-alpha-D-ribose 1-diphosphate: step 1/9. In terms of biological role, catalyzes the condensation of ATP and 5-phosphoribose 1-diphosphate to form N'-(5'-phosphoribosyl)-ATP (PR-ATP). Has a crucial role in the pathway because the rate of histidine biosynthesis seems to be controlled primarily by regulation of HisG enzymatic activity. The sequence is that of ATP phosphoribosyltransferase from Prochlorococcus marinus (strain NATL1A).